Consider the following 161-residue polypeptide: Interleukin-17F (161 aa).

The signal sequence occupies residues 1–28; sequence MKGSCETTMVKSLLLLMLGFAIISSGAA. An N-linked (GlcNAc...) asparagine glycan is attached at Asn-83. 2 disulfide bridges follow: Cys-100–Cys-150 and Cys-105–Cys-152.

The protein belongs to the IL-17 family. Homodimer; disulfide-linked. Heterodimer with IL17A (IL17A-IL17F). Forms complexes with IL17RA and IL17RC receptors with 2:1 binding stoichiometry: two receptor chains for one interleukin molecule. IL17F homodimer forms predominantly complexes with IL17RC homodimer, whereas IL17A-IL17F favors complexes with IL17RA-IL17RC. IL17RA and IL17RC chains cannot distinguish between IL17A and IL17F molecules, potentially enabling the formation of topologically distinct complexes.

The protein localises to the secreted. Its function is as follows. Effector cytokine of innate and adaptive immune system involved in antimicrobial host defense and maintenance of tissue integrity. IL17A-IL17F signals via IL17RA-IL17RC heterodimeric receptor complex, triggering homotypic interaction of IL17RA and IL17RC chains with TRAF3IP2 adapter through SEFIR domains. This leads to downstream TRAF6-mediated activation of NF-kappa-B and MAPkinase pathways ultimately resulting in transcriptional activation of cytokines, chemokines, antimicrobial peptides and matrix metalloproteinases, with potential strong immune inflammation. IL17A-IL17F is primarily involved in host defense against extracellular bacteria and fungi by inducing neutrophilic inflammation. As signature effector cytokine of T-helper 17 cells (Th17), primarily induces neutrophil activation and recruitment at infection and inflammatory sites. Stimulates the production of antimicrobial beta-defensins DEFB1, DEFB103A, and DEFB104A by mucosal epithelial cells, limiting the entry of microbes through the epithelial barriers. IL17F homodimer can signal via IL17RC homodimeric receptor complex, triggering downstream activation of TRAF6 and NF-kappa-B signaling pathway. Via IL17RC induces transcriptional activation of IL33, a potent cytokine that stimulates group 2 innate lymphoid cells and adaptive T-helper 2 cells involved in pulmonary allergic response to fungi. Likely via IL17RC, promotes sympathetic innervation of peripheral organs by coordinating the communication between gamma-delta T cells and parenchymal cells. Stimulates sympathetic innervation of thermogenic adipose tissue by driving TGFB1 expression. Regulates the composition of intestinal microbiota and immune tolerance by inducing antimicrobial proteins that specifically control the growth of commensal Firmicutes and Bacteroidetes. This Rattus norvegicus (Rat) protein is Interleukin-17F (Il17f).